The sequence spans 326 residues: G-protein coupled receptor 1 (326 aa).

S2 is modified (N-acetylserine). The Extracellular segment spans residues 2 to 23 (SAVLTAGGGLTAGDRSIITAIN). The helical transmembrane segment at 24–44 (TGASSLSFVGSAFIVLCYCLF) threads the bilayer. The Cytoplasmic segment spans residues 45–51 (KELRKFS). Residues 52 to 72 (FKLVFYLALSDMLCSFFLIVG) form a helical membrane-spanning segment. At 73 to 84 (DPSKGFICYAQG) the chain is on the extracellular side. C80 and C151 are oxidised to a cystine. A helical membrane pass occupies residues 85 to 105 (YTTHFFCVASFLWTTTIAFTL). The Cytoplasmic segment spans residues 106–120 (HRTVVKHKTDVEDLE). A helical membrane pass occupies residues 121–141 (AMFHLYVWGTSLVVTVIRSFG). At 142-160 (NNHSHLGPWCWTQTGLKGK) the chain is on the extracellular side. An N-linked (GlcNAc...) asparagine glycan is attached at N143. Residues 161 to 181 (AVHFLTFYAPLWGAILYNGFT) traverse the membrane as a helical segment. Over 182 to 213 (YFQVIRMLRNARRMAVGMSDRVDQFDNRAELK) the chain is Cytoplasmic. The chain crosses the membrane as a helical span at residues 214 to 234 (VLNRWGYYPLILIGSWAFGTI). Topologically, residues 235 to 246 (NRIHDFIEPGHK) are extracellular. The chain crosses the membrane as a helical span at residues 247-267 (IFWLSVLDVGTAALMGLFNSI). Residues 268–326 (AYGFNSSVRRAIHERLELFLPERLYRWLPSNFRPKNHLILHQQQQQRSEMVSLKTEDQQ) lie on the Cytoplasmic side of the membrane.

The protein belongs to the G-protein coupled receptor 2 family. As to quaternary structure, interacts with GPA1. Mostly present in the meristematic regions. Expressed at low levels in seedlings, vascular tissues of cotyledons, hypocotyl, and roots, stems, leaves, flowering buds and siliques. In dark-grown seedlings, localized in the cotyledons and the hook.

Its subcellular location is the cell membrane. Functionally, together with GPA1, may regulate the cell cycle via a signaling cascade that uses phosphatidylinositol-specific phospholipase C (PI-PLC) as an effector and inositol 1,4,5-trisphosphate(IP(3)) as a second messenger. Promotes PI-PLC activity and IP(3) accumulation. Involved in the blue light (BL) signaling. Together with GPA1 and ADT3, required for BL-mediated synthesis of phenylpyruvate and subsequently of phenylalanine (Phe), in etiolated seedlings. Probably involved in cytokinin signal transduction. Plays a positive role in gibberellin- (GA) and brassinosteroid- (BR) regulated seed germination, probably independently of a heterotrimeric G-protein. Mediates seed dormancy abolition, and promotes seed germination and flowering. The chain is G-protein coupled receptor 1 (GCR1) from Arabidopsis thaliana (Mouse-ear cress).